A 165-amino-acid chain; its full sequence is Transcriptional repressor NrdR (165 aa).

The segment at 3-34 (CPFCGAQDTRVVDSRLSHEGDQVRRRRECGEC) is a zinc-finger region. The ATP-cone domain maps to 49–139 (PRVVKSDGSR…VYRRFEDVNQ (91 aa)).

It belongs to the NrdR family. Zn(2+) serves as cofactor.

In terms of biological role, negatively regulates transcription of bacterial ribonucleotide reductase nrd genes and operons by binding to NrdR-boxes. In Methylococcus capsulatus (strain ATCC 33009 / NCIMB 11132 / Bath), this protein is Transcriptional repressor NrdR.